The sequence spans 445 residues: Chromosome partition protein MukF (445 aa).

Residues 212–240 (LDETSGNLRELQDTLNAAGDKLQEQLLRI) form a leucine-zipper region.

It belongs to the MukF family. As to quaternary structure, interacts, and probably forms a ternary complex, with MukE and MukB via its C-terminal region. The complex formation is stimulated by calcium or magnesium. It is required for an interaction between MukE and MukB.

The protein localises to the cytoplasm. It localises to the nucleoid. Its function is as follows. Involved in chromosome condensation, segregation and cell cycle progression. May participate in facilitating chromosome segregation by condensation DNA from both sides of a centrally located replisome during cell division. Not required for mini-F plasmid partitioning. Probably acts via its interaction with MukB and MukE. Overexpression results in anucleate cells. It has a calcium binding activity. This chain is Chromosome partition protein MukF, found in Mannheimia succiniciproducens (strain KCTC 0769BP / MBEL55E).